The chain runs to 498 residues: ATP synthase subunit beta, chloroplastic (498 aa).

172-179 (GGAGVGKT) serves as a coordination point for ATP.

Belongs to the ATPase alpha/beta chains family. In terms of assembly, F-type ATPases have 2 components, CF(1) - the catalytic core - and CF(0) - the membrane proton channel. CF(1) has five subunits: alpha(3), beta(3), gamma(1), delta(1), epsilon(1). CF(0) has four main subunits: a(1), b(1), b'(1) and c(9-12).

It localises to the plastid. Its subcellular location is the chloroplast thylakoid membrane. The catalysed reaction is ATP + H2O + 4 H(+)(in) = ADP + phosphate + 5 H(+)(out). Functionally, produces ATP from ADP in the presence of a proton gradient across the membrane. The catalytic sites are hosted primarily by the beta subunits. The polypeptide is ATP synthase subunit beta, chloroplastic (Castanea sativa (Sweet chestnut)).